Here is a 292-residue protein sequence, read N- to C-terminus: Putative sugar lactone lactonase YvrE (292 aa).

The a divalent metal cation site is built by Glu15, Asn146, and Asp196.

This sequence belongs to the SMP-30/CGR1 family. A divalent metal cation is required as a cofactor.

The protein resides in the cytoplasm. This is Putative sugar lactone lactonase YvrE (yvrE) from Bacillus subtilis (strain 168).